The chain runs to 368 residues: D-alanine--D-alanine ligase (368 aa).

The 204-residue stretch at 145–348 folds into the ATP-grasp domain; that stretch reads KRLLQGAGLH…YQDLITTLIE (204 aa). 175–230 is a binding site for ATP; the sequence is ADQLGLPLFIKPANQGSSVGVNKATTEAEFTAAIEEAFSYDHKVLIEAAIKGREIE. Residues Asp-302, Glu-315, and Asn-317 each contribute to the Mg(2+) site.

The protein belongs to the D-alanine--D-alanine ligase family. Mg(2+) is required as a cofactor. It depends on Mn(2+) as a cofactor.

Its subcellular location is the cytoplasm. It catalyses the reaction 2 D-alanine + ATP = D-alanyl-D-alanine + ADP + phosphate + H(+). It participates in cell wall biogenesis; peptidoglycan biosynthesis. Cell wall formation. This Shouchella clausii (strain KSM-K16) (Alkalihalobacillus clausii) protein is D-alanine--D-alanine ligase.